Consider the following 885-residue polypeptide: Protein transport protein SEC24-1 (885 aa).

Zn(2+)-binding residues include C164, C167, C186, and C189. The interval 164-189 is zinc finger-like; that stretch reads CRRCRSYLNPFVAFIEQGRRWQCNIC. The interval 296-332 is disordered; sequence DDYEESDDDDDEDDDDEEEDNEEEEEEEEDEEDDDDS.

The protein belongs to the SEC23/SEC24 family. SEC24 subfamily. As to quaternary structure, the COPII coat is composed of at least 5 proteins: the SEC23/24 complex, the SEC13/31 complex, and the protein SAR1. Golgi apparatus membrane; Peripheral membrane protein; Cytoplasmic side.

It is found in the cytoplasm. It localises to the cytoplasmic vesicle. The protein localises to the COPII-coated vesicle membrane. Its subcellular location is the endoplasmic reticulum membrane. The protein resides in the golgi apparatus membrane. Component of the coat protein complex II (COPII) which promotes the formation of transport vesicles from the endoplasmic reticulum (ER). The coat has two main functions, the physical deformation of the endoplasmic reticulum membrane into vesicles and the selection of cargo molecules. The protein is Protein transport protein SEC24-1 (SEC241) of Saccharomyces uvarum (strain ATCC 76518 / CBS 7001 / CLIB 283 / NBRC 10550 / MCYC 623 / NCYC 2669 / NRRL Y-11845) (Yeast).